Consider the following 531-residue polypeptide: SWI/SNF-related matrix-associated actin-dependent regulator of chromatin subfamily D member 2 (531 aa).

Positions 20-85 (AVAAALGAPP…MSPGSRMPMA (66 aa)) are disordered. Residues 34 to 45 (PGMLPNPALRGP) are compositionally biased toward low complexity. 2 positions are modified to asymmetric dimethylarginine: Arg81 and Arg104. The tract at residues 202–226 (FSPSKADGDNSGTAGTPGGTPAADK) is disordered. Ser203 carries the post-translational modification Phosphoserine. Thr217 is modified (phosphothreonine). Lys226 participates in a covalent cross-link: Glycyl lysine isopeptide (Lys-Gly) (interchain with G-Cter in SUMO2). The region spanning 306-383 (HQPPQYKLDP…PMKLAGLLQH (78 aa)) is the SWIB/MDM2 domain.

Belongs to the SMARCD family. Component of the multiprotein chromatin-remodeling complexes SWI/SNF: SWI/SNF-A (BAF), SWI/SNF-B (PBAF) and related complexes. The canonical complex contains a catalytic subunit (either SMARCA4/BRG1/BAF190A or SMARCA2/BRM/BAF190B), and at least SMARCE1, ACTL6A/BAF53, SMARCC1/BAF155, SMARCC2/BAF170, and SMARCB1/SNF5/BAF47. Other subunits specific to each of the complexes may also be present permitting several possible combinations developmentally and tissue specific. Component of the BAF complex, which includes at least actin (ACTB), ARID1A/BAF250A, ARID1B/BAF250B, SMARCA2/BRM, SMARCA4/BRG1, ACTL6A/BAF53, ACTL6B/BAF53B, SMARCE1/BAF57, SMARCC1/BAF155, SMARCC2/BAF170, SMARCB1/SNF5/INI1, and one or more SMARCD1/BAF60A, SMARCD2/BAF60B, or SMARCD3/BAF60C. In muscle cells, the BAF complex also contains DPF3. Component of the SWI/SNF-B (PBAF) chromatin remodeling complex, at least composed of SMARCA4/BRG1, SMARCB1/BAF47/SNF5, ACTL6A/BAF53A or ACTL6B/BAF53B, SMARCE1/BAF57, SMARCD1/BAF60A, SMARCD2/BAF60B, perhaps SMARCD3/BAF60C, SMARCC1/BAF155, SMARCC2/BAF170, PBRM1/BAF180, ARID2/BAF200 and actin (ACTB). Interacts with UNKL. Interacts with CEBPE. In terms of processing, ubiquitinated through a signaling process involving RAC1 and the RING finger protein UNKL.

Its subcellular location is the nucleus. In terms of biological role, involved in transcriptional activation and repression of select genes by chromatin remodeling (alteration of DNA-nucleosome topology). Component of SWI/SNF chromatin remodeling complexes that carry out key enzymatic activities, changing chromatin structure by altering DNA-histone contacts within a nucleosome in an ATP-dependent manner. Critical regulator of myeloid differentiation, controlling granulocytopoiesis and the expression of genes involved in neutrophil granule formation. The polypeptide is SWI/SNF-related matrix-associated actin-dependent regulator of chromatin subfamily D member 2 (Smarcd2) (Rattus norvegicus (Rat)).